A 349-amino-acid chain; its full sequence is UDP-3-O-acylglucosamine N-acyltransferase (349 aa).

His248 acts as the Proton acceptor in catalysis.

It belongs to the transferase hexapeptide repeat family. LpxD subfamily. As to quaternary structure, homotrimer.

It catalyses the reaction a UDP-3-O-[(3R)-3-hydroxyacyl]-alpha-D-glucosamine + a (3R)-hydroxyacyl-[ACP] = a UDP-2-N,3-O-bis[(3R)-3-hydroxyacyl]-alpha-D-glucosamine + holo-[ACP] + H(+). It functions in the pathway bacterial outer membrane biogenesis; LPS lipid A biosynthesis. Catalyzes the N-acylation of UDP-3-O-acylglucosamine using 3-hydroxyacyl-ACP as the acyl donor. Is involved in the biosynthesis of lipid A, a phosphorylated glycolipid that anchors the lipopolysaccharide to the outer membrane of the cell. The chain is UDP-3-O-acylglucosamine N-acyltransferase from Gloeothece citriformis (strain PCC 7424) (Cyanothece sp. (strain PCC 7424)).